The sequence spans 282 residues: Glycine betaine/carnitine transport permease protein GbuB (282 aa).

A run of 6 helical transmembrane segments spans residues 44-64 (VFDL…TFWV), 70-90 (KWGL…LDFW), 99-119 (LVLT…IWMA), 140-160 (AFVY…PGVV), 220-240 (IMLA…GLGT), and 251-271 (AGGG…LDRL). In terms of domain architecture, ABC transmembrane type-1 spans 93-272 (MTQTLTLVLT…IVAIILDRLT (180 aa)).

It belongs to the binding-protein-dependent transport system permease family. In terms of assembly, the complex is composed of two ATP-binding proteins (GbuA), two transmembrane proteins (GbuB) and a solute-binding protein (GbuC).

Its subcellular location is the cell membrane. The complex is activated by an osmotic gradient or by low temperature. Part of the ABC transporter complex GbuABC involved in glycine betaine uptake. Responsible for the translocation of the substrate across the membrane. Involved, with BetL and OpuC, in osmoprotection and cryoprotection of Listeria. Can also uptake carnitine when carnitine is abundant in the growth medium. The sequence is that of Glycine betaine/carnitine transport permease protein GbuB (gbuB) from Listeria monocytogenes serotype 1/2a (strain 10403S).